Reading from the N-terminus, the 307-residue chain is Putative F-box protein PP2-B6 (307 aa).

Residues 42 to 88 (HSPFDDLPEDCISNIISFTSPRDVCVSASVSKSFAHAVQCDSIWEKF) form the F-box domain.

The chain is Putative F-box protein PP2-B6 (PP2B6) from Arabidopsis thaliana (Mouse-ear cress).